Consider the following 148-residue polypeptide: 3-hydroxyacyl-[acyl-carrier-protein] dehydratase FabZ (148 aa).

His47 is an active-site residue.

Belongs to the thioester dehydratase family. FabZ subfamily.

It is found in the cytoplasm. The catalysed reaction is a (3R)-hydroxyacyl-[ACP] = a (2E)-enoyl-[ACP] + H2O. In terms of biological role, involved in unsaturated fatty acids biosynthesis. Catalyzes the dehydration of short chain beta-hydroxyacyl-ACPs and long chain saturated and unsaturated beta-hydroxyacyl-ACPs. This is 3-hydroxyacyl-[acyl-carrier-protein] dehydratase FabZ from Hydrogenobaculum sp. (strain Y04AAS1).